Consider the following 487-residue polypeptide: uncharacterized protein (487 aa).

The next 3 helical transmembrane spans lie at 10 to 30 (AALM…AADA), 45 to 65 (VISP…AVAA), and 439 to 459 (APVV…DFTL).

Its subcellular location is the cell membrane. This is an uncharacterized protein from Mycobacterium tuberculosis (strain CDC 1551 / Oshkosh).